A 1476-amino-acid polypeptide reads, in one-letter code: MEPSMDVNSVTISVEGMTCISCVRTIEQKIGKENGIHHIKVSLEEKSATIIYDPKLQTPKTLQEAIDDMGFDALLHNANPLPVLTDTLFLTVTASLTLPWDHIQSTLLKTKGVTDIKIFPQKRTLAVTIIPSIVNANQIKELVPELSLETGTLEKRSGACEDHSMAQAGEVVLKIKVEGMTCHSCTSTTEGKIGKLQGVQRIKVSLDNQEATIVYQPHLISVEEIKKQIEAMGFPAFVKKQPKYLKLGAIDVERLKNTPVKSLEGSQQRPSYPSDSTATFIIEGMHCKSCVSNIESALPTLQYVSSIAVSLENRSAIVKYNASSVTPEMLIKAIEAVSPGQYRVSIANEVESTSSSPSSSSLQKMPLNVVSQPLTQETVINISGMTCNSCVQSIEGVVSKKPGVKSIHVSLANSFGTVEYDPLLTAPETLREVIVDMGFDAVLPDMSEPLVVIAQPSLETPLLPSTNDQDNMMTAVHSKCYIQVSGMTCASCVANIERNLRREEGIYSVLVALMAGKAEVRYNPAVIQPPVIAEFIRELGFGATVMENADEGDGILKLVVRGMTCASCVHKIESTLTKHKGIFYCSVALATNKAHIKYDPEIIGPRDIIHTIGSLGFEASLVKKDRSASHLDHKREIKQWRSSFLVSLFFCTPVMGLMMYMMAMEHHFATIHHNQSMSNEEMIKNHSSMFLERQILPGLSIMNLLSLLLCLPVQFFGGWYFYIQAYKALKHKTANMDVLIVLATTIAFAYSLIILLVAMYERAKVNPITSFDTPPMLFVFIALGRWLEHIAKGKTSEALAKLISLQATEATIVTLDSDNILLSEEQVDVELVQRGDIIKVVPGGKFPVDGRVIEGHSMVDESLITGEAMPVAKKPGSTVIAGSINQNGSLLICATHVGADTTLSQIVKLVEEAQTSKAPIQQFADKLGGYFVPFIVLVSIATLLVWIIIGFQNFTIVETYFPGYSRSISRTETIIRFAFQASITVLCIACPCSLGLATPTAVMVGTGVGAQNGILIKGGEPLEMAHKVKVVVFDKTGTITHGTPVVNQVKVLVESNKIPRSKILAIVGTAESNSEHPLGAAVTKYCKQELDTETLGTCTDFQVVPGCGISCKVTNIEGLLHKSNLKIEENNTKNASLVQIDAINEQSSTSSSMIIDAPLSNAVDTQQYKVLIGNREWMIRNGLVISNDVDDSMIDHGRKGRPAVLVTIDDELCGLIAIADTVKPEAELAVHILKSMGLEVVLMTGDNSKTARSIASQVGITKVFAEVLPSHKVAKVKQLQEEGKRVAMVGDGINDSPALAMANVGIAIGTGTDVTIEAADVVFIRNDLLDVVASIDLSRKTVKRIRINFLFPLIYNLVGIPIAAGVFLPIGLVFQPWMGSAAMAASSVSVVLSSLFLKLYRKPTYDNYELRTRSHTGQRSPSEISVHVGIDDASRNSPRLGLLDRIVNYSRASINSLLSDKRSLNSVVNSEPDKHS.

Residues 1-642 (MEPSMDVNSV…HKREIKQWRS (642 aa)) lie on the Cytoplasmic side of the membrane. 2 consecutive HMA domains span residues 8–74 (NSVT…FDAL) and 85–151 (TDTL…LETG). 3 residues coordinate Cu(+): T18, C19, and C22. T152 carries the post-translational modification Phosphothreonine. HMA domains are found at residues 171 to 237 (VVLK…FPAF) and 276 to 342 (STAT…PGQY). Cu(+)-binding residues include C182, C185, C287, and C290. Residue T326 is modified to Phosphothreonine. S338, S352, S356, and S361 each carry phosphoserine. 3 HMA domains span residues 376-442 (QETV…FDAV), 478-544 (SKCY…FGAT), and 554-620 (GILK…FEAS). C387, C390, C489, C492, C565, and C568 together coordinate Cu(+). The helical transmembrane segment at 643 to 665 (SFLVSLFFCTPVMGLMMYMMAME) threads the bilayer. N-linked (GlcNAc...) asparagine glycosylation is found at N674 and N685. Transmembrane regions (helical) follow at residues 695 to 717 (ILPG…QFFG), 736 to 760 (MDVL…VAMY), and 770 to 788 (SFDT…RWLE). N-linked (GlcNAc...) asparagine glycosylation occurs at N887. The chain crosses the membrane as a helical span at residues 930 to 952 (YFVPFIVLVSIATLLVWIIIGFQ). N-linked (GlcNAc...) asparagine glycosylation occurs at N953. The helical transmembrane segment at 978–998 (AFQASITVLCIACPCSLGLAT) threads the bilayer. D1034 serves as the catalytic 4-aspartylphosphate intermediate. N-linked (GlcNAc...) asparagine glycosylation is found at N1130 and N1134. Helical transmembrane passes span 1347 to 1373 (INFL…IGLV) and 1379 to 1397 (GSAA…SLFL). S1420 and S1422 each carry phosphoserine. N1448 carries N-linked (GlcNAc...) asparagine glycosylation. 7 positions are modified to phosphoserine: S1450, S1453, S1456, S1459, S1463, S1466, and S1476.

This sequence belongs to the cation transport ATPase (P-type) (TC 3.A.3) family. In terms of assembly, monomer. Interacts with PDZD11. Interacts with ATOX1 and COMMD1. Interacts with TYRP1. Directly interacts with SOD3; this interaction is copper-dependent and is required for SOD3 activity. In terms of tissue distribution, expressed in most tissues except liver.

The protein localises to the golgi apparatus. It localises to the trans-Golgi network membrane. Its subcellular location is the cell membrane. The enzyme catalyses Cu(+)(in) + ATP + H2O = Cu(+)(out) + ADP + phosphate + H(+). In terms of biological role, may function in the export of copper from the cytoplasm to an intracellular organelle. It may serve as well for the export of other metals. The polypeptide is Copper-transporting ATPase 1 (ATP7A) (Cricetulus griseus (Chinese hamster)).